Reading from the N-terminus, the 316-residue chain is N-acetyl-gamma-glutamyl-phosphate reductase (316 aa).

Residue Cys136 is part of the active site.

Belongs to the NAGSA dehydrogenase family. Type 1 subfamily.

Its subcellular location is the cytoplasm. The catalysed reaction is N-acetyl-L-glutamate 5-semialdehyde + phosphate + NADP(+) = N-acetyl-L-glutamyl 5-phosphate + NADPH + H(+). It functions in the pathway amino-acid biosynthesis; L-arginine biosynthesis; N(2)-acetyl-L-ornithine from L-glutamate: step 3/4. Catalyzes the NADPH-dependent reduction of N-acetyl-5-glutamyl phosphate to yield N-acetyl-L-glutamate 5-semialdehyde. In Xanthomonas campestris pv. campestris (strain B100), this protein is N-acetyl-gamma-glutamyl-phosphate reductase.